The chain runs to 443 residues: ATP-dependent protease ATPase subunit HslU (443 aa).

ATP-binding positions include Ile-18, 60-65 (GVGKTE), Asp-256, Glu-321, and Arg-393.

Belongs to the ClpX chaperone family. HslU subfamily. A double ring-shaped homohexamer of HslV is capped on each side by a ring-shaped HslU homohexamer. The assembly of the HslU/HslV complex is dependent on binding of ATP.

The protein resides in the cytoplasm. Functionally, ATPase subunit of a proteasome-like degradation complex; this subunit has chaperone activity. The binding of ATP and its subsequent hydrolysis by HslU are essential for unfolding of protein substrates subsequently hydrolyzed by HslV. HslU recognizes the N-terminal part of its protein substrates and unfolds these before they are guided to HslV for hydrolysis. The polypeptide is ATP-dependent protease ATPase subunit HslU (Pectobacterium carotovorum subsp. carotovorum (strain PC1)).